Consider the following 190-residue polypeptide: Subtilisin inhibitor CLSI-II (190 aa).

Cystine bridges form between Cys-44-Cys-88 and Cys-142-Cys-149.

It belongs to the protease inhibitor I3 (leguminous Kunitz-type inhibitor) family. In terms of assembly, forms active dimers on storage in aqueous solution, possibly through formation of an intermolecular disulfide bond. In terms of processing, the N-terminal Asn is removed in about 50% of both the CLSI-II and CLSI-III chains.

The protein localises to the secreted. Functionally, inhibits subtilisin-type microbial serine proteases incuding proteinase K, subtilisin BPN', subtilisin Carlsberg and subtilisin E in a non-stoichiometric manner. Weakly inhibits A.oryzae protease and some metalloproteases including pronase E. Does not inhibit trypsin, chymotrypsin, S.griseus alkaline protease or A.lyticus lysyl endopeptidase. CLSI-II has a wider inhibitory specificity than CLSI-III. This Canavalia lineata (Beach bean) protein is Subtilisin inhibitor CLSI-II.